Reading from the N-terminus, the 683-residue chain is MAKKKGEEQDFEEEPNFDDPEGFVDDVSDEELLGDFLRQKPCESDGVENVIVVDNIPVVGAARFPKLKGIIEKIFKNAGTIVNVHYPKDEEDNTKGYAFVEYKNQESAEEAVKSLNNYRLDKHYTLLVNRFADFQKYSDIPKEWSPPQPQPYKVQNDLYNFLLEADAQDQFCVVSETVPGSVQVQFCQNTQPEPTELLKRERFTDTYVKWSPKGTYIVTFHKQGVVVWGGSSFVKVNKFAHSNAQFVDISPCEQYLVTYGPNGQKIVIWDIRTGAEKRTFVSDGMSNASMLRWSHDDRYVARLVDSQIQIYDTTTFFLLDMKSIRVEGIRNFSWSPTDNIIAYWVAEEVDVPAKVTLMAIPKKTELRTKNLFNVADCKIHWQKSGDYLCVKVDRFSKSKKEKKDKKDSDVKFLGMFYNFEIFHMREKDIPVDSVEVKETILAFAWEPVGSKFSIIHGEPSSANVSFYETNKGQEPVLVKKLEKKVCGHLFWSPRGQFIVLANLQMGTFEFVDTNDFSIMKTGDHYRASEVEWDPTGRYVVTGTSGKAKEDQGYYMWSFQGRILKRVNLKNFMLFLWRPRPPTLLSDAKQKEILKNLKKYYSQFESKDRLRMTRASKELIEKRAKLREQFTEYRSKRVKEWEDQKKRRMQLRNNVDTDTLEADPDNVEEEIVEILVREDTTVIE.

Positions 1–25 (MAKKKGEEQDFEEEPNFDDPEGFVD) are disordered. A compositionally biased stretch (acidic residues) spans 9–25 (QDFEEEPNFDDPEGFVD). Positions 49–133 (NVIVVDNIPV…YTLLVNRFAD (85 aa)) constitute an RRM domain. WD repeat units follow at residues 199–238 (KRERFTDTYVKWSPKGTYIVTFHKQGVVVWGGSSFVKVNK), 240–279 (AHSNAQFVDISPCEQYLVTYGPNGQKIVIWDIRTGAEKRT), 283–321 (DGMSNASMLRWSHDDRYVARLVDSQIQIYDTTTFFLLDM), 324–359 (IRVEGIRNFSWSPTDNIIAYWVAEEVDVPAKVTLMA), 435–477 (EVKE…EPVL), and 522–567 (GDHY…KRVN). Residues 611 to 638 (MTRASKELIEKRAKLREQFTEYRSKRVK) are a coiled coil.

Belongs to the eIF-3 subunit B family. As to quaternary structure, component of the eukaryotic translation initiation factor 3 (eIF-3) complex.

It is found in the cytoplasm. Functionally, RNA-binding component of the eukaryotic translation initiation factor 3 (eIF-3) complex, which is involved in protein synthesis of a specialized repertoire of mRNAs and, together with other initiation factors, stimulates binding of mRNA and methionyl-tRNAi to the 40S ribosome. The eIF-3 complex specifically targets and initiates translation of a subset of mRNAs involved in cell proliferation. This is Eukaryotic translation initiation factor 3 subunit B from Anopheles gambiae (African malaria mosquito).